The following is a 305-amino-acid chain: Ribosomal RNA large subunit methyltransferase F (305 aa).

The protein belongs to the methyltransferase superfamily. METTL16/RlmF family.

The protein resides in the cytoplasm. It catalyses the reaction adenosine(1618) in 23S rRNA + S-adenosyl-L-methionine = N(6)-methyladenosine(1618) in 23S rRNA + S-adenosyl-L-homocysteine + H(+). Specifically methylates the adenine in position 1618 of 23S rRNA. The sequence is that of Ribosomal RNA large subunit methyltransferase F from Enterobacter sp. (strain 638).